The following is a 380-amino-acid chain: Actinidain (380 aa).

The signal sequence occupies residues 1-24; that stretch reads MGLPKSFVSMSLLFFSTLLILSLA. Residues 25–126 constitute a propeptide, activation peptide; the sequence is FNAKNLTQRT…NRYEPRVGQV (102 aa). N-linked (GlcNAc...) asparagine glycosylation is found at Asn-29, Asn-81, and Asn-111. 3 disulfides stabilise this stretch: Cys-148–Cys-191, Cys-182–Cys-224, and Cys-282–Cys-332. Residue Cys-151 is part of the active site. Active-site residues include His-288 and Asn-308.

The protein belongs to the peptidase C1 family. As to expression, fruit, present in small cells of the outer pericarp of mature fruit, but not large cells.

It carries out the reaction Specificity close to that of papain.. Cysteine protease responsible for the cleavage of kiwellin into kissper and KiTH. This Actinidia deliciosa (Kiwi) protein is Actinidain.